Reading from the N-terminus, the 95-residue chain is Integration host factor subunit beta (95 aa).

Belongs to the bacterial histone-like protein family. Heterodimer of an alpha and a beta chain.

In terms of biological role, this protein is one of the two subunits of integration host factor, a specific DNA-binding protein that functions in genetic recombination as well as in transcriptional and translational control. In Shewanella sp. (strain ANA-3), this protein is Integration host factor subunit beta.